We begin with the raw amino-acid sequence, 146 residues long: Cytochrome c oxidase subunit 5A, mitochondrial (146 aa).

The transit peptide at 1-37 (MLAAALRRCTAAAAARGLLHPASAPSPAAAVCSIRCY) directs the protein to the mitochondrion. The SIFI-degron signature appears at 2–16 (LAAALRRCTAAAAAR). N6-acetyllysine is present on residues Lys83 and Lys109. Position 137 is a phosphothreonine (Thr137).

The protein belongs to the cytochrome c oxidase subunit 5A family. In terms of assembly, component of the cytochrome c oxidase (complex IV, CIV), a multisubunit enzyme composed of 14 subunits. The complex is composed of a catalytic core of 3 subunits MT-CO1, MT-CO2 and MT-CO3, encoded in the mitochondrial DNA, and 11 supernumerary subunits COX4I, COX5A, COX5B, COX6A, COX6B, COX6C, COX7A, COX7B, COX7C, COX8 and NDUFA4, which are encoded in the nuclear genome. The complex exists as a monomer or a dimer and forms supercomplexes (SCs) in the inner mitochondrial membrane with NADH-ubiquinone oxidoreductase (complex I, CI) and ubiquinol-cytochrome c oxidoreductase (cytochrome b-c1 complex, complex III, CIII), resulting in different assemblies (supercomplex SCI(1)III(2)IV(1) and megacomplex MCI(2)III(2)IV(2)). Interacts with AFG1L. Interacts with RAB5IF. In response to mitochondrial stress, the precursor protein is ubiquitinated by the SIFI complex in the cytoplasm before mitochondrial import, leading to its degradation. Within the SIFI complex, UBR4 initiates ubiquitin chain that are further elongated or branched by KCMF1.

The protein resides in the mitochondrion inner membrane. It participates in energy metabolism; oxidative phosphorylation. In terms of biological role, component of the cytochrome c oxidase, the last enzyme in the mitochondrial electron transport chain which drives oxidative phosphorylation. The respiratory chain contains 3 multisubunit complexes succinate dehydrogenase (complex II, CII), ubiquinol-cytochrome c oxidoreductase (cytochrome b-c1 complex, complex III, CIII) and cytochrome c oxidase (complex IV, CIV), that cooperate to transfer electrons derived from NADH and succinate to molecular oxygen, creating an electrochemical gradient over the inner membrane that drives transmembrane transport and the ATP synthase. Cytochrome c oxidase is the component of the respiratory chain that catalyzes the reduction of oxygen to water. Electrons originating from reduced cytochrome c in the intermembrane space (IMS) are transferred via the dinuclear copper A center (CU(A)) of subunit 2 and heme A of subunit 1 to the active site in subunit 1, a binuclear center (BNC) formed by heme A3 and copper B (CU(B)). The BNC reduces molecular oxygen to 2 water molecules using 4 electrons from cytochrome c in the IMS and 4 protons from the mitochondrial matrix. The polypeptide is Cytochrome c oxidase subunit 5A, mitochondrial (Cox5a) (Mus musculus (Mouse)).